We begin with the raw amino-acid sequence, 363 residues long: Protein-glutamate methylesterase/protein-glutamine glutaminase of group 3 operon (363 aa).

The 118-residue stretch at arginine 7 to arginine 124 folds into the Response regulatory domain. Position 58 is a 4-aspartylphosphate (aspartate 58). Positions proline 166–glycine 357 constitute a CheB-type methylesterase domain. Catalysis depends on residues serine 177, histidine 203, and aspartate 299.

It belongs to the CheB family. Phosphorylated by CheA. Phosphorylation of the N-terminal regulatory domain activates the methylesterase activity.

Its subcellular location is the cytoplasm. The enzyme catalyses [protein]-L-glutamate 5-O-methyl ester + H2O = L-glutamyl-[protein] + methanol + H(+). It carries out the reaction L-glutaminyl-[protein] + H2O = L-glutamyl-[protein] + NH4(+). In terms of biological role, involved in chemotaxis. Part of a chemotaxis signal transduction system that modulates chemotaxis in response to various stimuli. Catalyzes the demethylation of specific methylglutamate residues introduced into the chemoreceptors (methyl-accepting chemotaxis proteins or MCP) by CheR. Also mediates the irreversible deamidation of specific glutamine residues to glutamic acid. This Bradyrhizobium diazoefficiens (strain JCM 10833 / BCRC 13528 / IAM 13628 / NBRC 14792 / USDA 110) protein is Protein-glutamate methylesterase/protein-glutamine glutaminase of group 3 operon.